A 71-amino-acid chain; its full sequence is MDIAQLVDMLSHMAHQAGQAINDKMNGNDLLNPESMIKAQFALQQYSTFINYESSLIKMIKDMLSGIIAKI.

Belongs to the SctF family. In terms of assembly, the core secretion machinery of the T3SS is composed of approximately 20 different proteins, including cytoplasmic components, a base, an export apparatus and a needle. This subunit polymerizes and forms the helical needle filament.

It is found in the secreted. The protein localises to the cell surface. In terms of biological role, component of the type III secretion system (T3SS), also called injectisome, which is used to inject bacterial effector proteins into eukaryotic host cells. SsaG/SctF2 forms the external needle filament that protrudes from the bacterial surface. During infection, can induce innate immune responses. The needle proteins interact with host TLR2 or TLR4, and induce signaling by NF-kappa-B and/or AP-1. This activation is MyD88 dependent and results in increased expression of cytokines, including TNF-alpha, IL-6 and IL-8. This is SPI-2 type 3 secretion system needle filament protein from Salmonella typhimurium (strain LT2 / SGSC1412 / ATCC 700720).